A 179-amino-acid polypeptide reads, in one-letter code: Large ribosomal subunit protein uL6 (179 aa).

Belongs to the universal ribosomal protein uL6 family. As to quaternary structure, part of the 50S ribosomal subunit.

This protein binds to the 23S rRNA, and is important in its secondary structure. It is located near the subunit interface in the base of the L7/L12 stalk, and near the tRNA binding site of the peptidyltransferase center. The polypeptide is Large ribosomal subunit protein uL6 (Streptomyces avermitilis (strain ATCC 31267 / DSM 46492 / JCM 5070 / NBRC 14893 / NCIMB 12804 / NRRL 8165 / MA-4680)).